The chain runs to 538 residues: Phosphoenolpyruvate carboxykinase (ATP) (538 aa).

Residues Arg61, Tyr195, and Lys201 each contribute to the substrate site. ATP is bound by residues Lys201, His220, and 236-244; that span reads GLSGTGKTT. Lys201 and His220 together coordinate Mn(2+). Asp257 contributes to the Mn(2+) binding site. ATP is bound by residues Glu285, Arg323, and Thr449. Arg323 is a substrate binding site.

It belongs to the phosphoenolpyruvate carboxykinase (ATP) family. Requires Mn(2+) as cofactor.

The protein localises to the cytoplasm. It carries out the reaction oxaloacetate + ATP = phosphoenolpyruvate + ADP + CO2. It functions in the pathway carbohydrate biosynthesis; gluconeogenesis. Functionally, involved in the gluconeogenesis. Catalyzes the conversion of oxaloacetate (OAA) to phosphoenolpyruvate (PEP) through direct phosphoryl transfer between the nucleoside triphosphate and OAA. The protein is Phosphoenolpyruvate carboxykinase (ATP) of Nitrobacter winogradskyi (strain ATCC 25391 / DSM 10237 / CIP 104748 / NCIMB 11846 / Nb-255).